Consider the following 206-residue polypeptide: Nucleoside triphosphate pyrophosphatase (206 aa).

D71 (proton acceptor) is an active-site residue.

The protein belongs to the Maf family. The cofactor is a divalent metal cation.

The protein localises to the cytoplasm. It catalyses the reaction a ribonucleoside 5'-triphosphate + H2O = a ribonucleoside 5'-phosphate + diphosphate + H(+). The enzyme catalyses a 2'-deoxyribonucleoside 5'-triphosphate + H2O = a 2'-deoxyribonucleoside 5'-phosphate + diphosphate + H(+). Functionally, nucleoside triphosphate pyrophosphatase. May have a dual role in cell division arrest and in preventing the incorporation of modified nucleotides into cellular nucleic acids. The sequence is that of Nucleoside triphosphate pyrophosphatase from Rippkaea orientalis (strain PCC 8801 / RF-1) (Cyanothece sp. (strain PCC 8801)).